A 121-amino-acid chain; its full sequence is uncharacterized protein (121 aa).

A run of 2 helical transmembrane segments spans residues 16–36 (GFMV…GFAV) and 74–94 (LYIA…MKTI).

It is found in the cell membrane. This is an uncharacterized protein from Bacillus subtilis (strain 168).